A 965-amino-acid chain; its full sequence is Phosphoenolpyruvate carboxylase 1 (965 aa).

Position 11 is a phosphoserine (serine 11). Histidine 172 is a catalytic residue. Residues tryptophan 283, arginine 450, and aspartate 597 each coordinate D-glucose 6-phosphate. Residue lysine 600 is part of the active site. A D-glucose 6-phosphate-binding site is contributed by arginine 635. Residue arginine 641 is part of the active site. Arginine 641 lines the L-aspartate pocket. Threonine 665 lines the D-glucose 6-phosphate pocket. Glutamine 673 contributes to the L-aspartate binding site. D-glucose 6-phosphate-binding positions include arginine 753 and 767–769 (RAI). Positions 829, 888, and 963 each coordinate L-aspartate.

Belongs to the PEPCase type 1 family. In terms of assembly, homotetramer. The cofactor is Mg(2+). Expressed in roots and stems and at low levels in leaves. Preferentially expressed in the phloem and in root tips.

The protein resides in the cytoplasm. The enzyme catalyses oxaloacetate + phosphate = phosphoenolpyruvate + hydrogencarbonate. With respect to regulation, activated by the allosteric regulator glucose-6-phosphate. Inhibited by malate and aspartate. Up regulated by light-reversible phosphorylation. Through the carboxylation of phosphoenolpyruvate (PEP) it forms oxaloacetate, a four-carbon dicarboxylic acid source for the tricarboxylic acid cycle. May be involved in phloem loading with sucrose and in anions and cations uptake and amino acid biosynthesis in roots. The protein is Phosphoenolpyruvate carboxylase 1 of Flaveria trinervia (Clustered yellowtops).